A 54-amino-acid polypeptide reads, in one-letter code: MARNEIRPIVKLRSTAGTGYTYVTRKNRRNDPDRIVLRKYDPVLRRHVEFREER.

It belongs to the bacterial ribosomal protein bL33 family.

In Mycolicibacterium smegmatis (strain ATCC 700084 / mc(2)155) (Mycobacterium smegmatis), this protein is Large ribosomal subunit protein bL33B.